Consider the following 514-residue polypeptide: Serine--tRNA ligase, cytoplasmic (514 aa).

Met1 is modified (N-acetylmethionine). Residues 9 to 61 (RVDKGGDPALIRETQEKRFKDPGLVDQLVKADSEWRRCRFRADNLNKLKNLCS) are interaction with tRNA. Residue Ser241 is modified to Phosphoserine. The L-serine site is built by Thr271 and Arg302. ATP is bound by residues 302–304 (RQE) and 318–321 (VHQF). N6-acetyllysine is present on Lys323. Glu325 lines the L-serine pocket. 391-394 (ELVS) is a binding site for ATP. Asn427 contacts L-serine. The segment at 471-514 (VKPAPIDQEPSKKQKKQHEGSKKKAAARDVALESRLQNMEVTDA) is disordered. Residues 479–502 (EPSKKQKKQHEGSKKKAAARDVAL) show a composition bias toward basic and acidic residues. The short motif at 482-494 (KKQKKQHEGSKKK) is the Nuclear localization signal element. Residues 505 to 514 (RLQNMEVTDA) are compositionally biased toward polar residues.

Belongs to the class-II aminoacyl-tRNA synthetase family. Type-1 seryl-tRNA synthetase subfamily. Homodimer. The tRNA molecule may bind across the dimer. Interacts with SIRT2. Interacts with METTL6; interaction is required for the tRNA N(3)-methylcytidine methyltransferase activity of METTL6.

Its subcellular location is the cytoplasm. The protein resides in the nucleus. The catalysed reaction is tRNA(Ser) + L-serine + ATP = L-seryl-tRNA(Ser) + AMP + diphosphate + H(+). It catalyses the reaction tRNA(Sec) + L-serine + ATP = L-seryl-tRNA(Sec) + AMP + diphosphate + H(+). It participates in aminoacyl-tRNA biosynthesis; selenocysteinyl-tRNA(Sec) biosynthesis; L-seryl-tRNA(Sec) from L-serine and tRNA(Sec): step 1/1. Catalyzes the attachment of serine to tRNA(Ser) in a two-step reaction: serine is first activated by ATP to form Ser-AMP and then transferred to the acceptor end of tRNA(Ser). Is probably also able to aminoacylate tRNA(Sec) with serine, to form the misacylated tRNA L-seryl-tRNA(Sec), which will be further converted into selenocysteinyl-tRNA(Sec). In the nucleus, binds to the VEGFA core promoter and prevents MYC binding and transcriptional activation by MYC. Recruits SIRT2 to the VEGFA promoter, promoting deacetylation of histone H4 at 'Lys-16' (H4K16). Thereby, inhibits the production of VEGFA and sprouting angiogenesis mediated by VEGFA. In Macaca fascicularis (Crab-eating macaque), this protein is Serine--tRNA ligase, cytoplasmic (SARS1).